The chain runs to 450 residues: Growth/differentiation factor 7 (450 aa).

Residues 1 to 19 (MDLSAAAALCLWLLSACRP) form the signal peptide. A propeptide spanning residues 20-321 (RDGLEAAAVL…AVIGGRRRRR (302 aa)) is cleaved from the precursor. Asn83 carries an N-linked (GlcNAc...) asparagine glycan. Positions 296–349 (ASEPLPDPGTGTASPRAVIGGRRRRRTALAGTRTAQGSGGGAGRGHGRRGRSRC) are disordered. Residues 340-349 (GHGRRGRSRC) show a composition bias toward basic residues. Disulfide bonds link Cys349–Cys415, Cys378–Cys447, and Cys382–Cys449.

Belongs to the TGF-beta family. As to quaternary structure, homodimer; disulfide-linked.

The protein localises to the secreted. Its function is as follows. May play an active role in the motor area of the primate neocortex. The polypeptide is Growth/differentiation factor 7 (GDF7) (Homo sapiens (Human)).